We begin with the raw amino-acid sequence, 172 residues long: NADH-ubiquinone oxidoreductase chain 6 (172 aa).

A run of 5 helical transmembrane segments spans residues 1-21 (MTYFMFLLLMALVVGLVAVAS), 25-45 (PYFAALGLVVAAGVGCGVLVG), 53-73 (LVLFLIYLGGMLVVFAYAALA), 86-106 (VLGYVLVYLLGVGLVAGIFWG), and 140-160 (GGMLVICAWVLLLTLLVVLEL).

It belongs to the complex I subunit 6 family.

Its subcellular location is the mitochondrion membrane. The enzyme catalyses a ubiquinone + NADH + 5 H(+)(in) = a ubiquinol + NAD(+) + 4 H(+)(out). Core subunit of the mitochondrial membrane respiratory chain NADH dehydrogenase (Complex I) that is believed to belong to the minimal assembly required for catalysis. Complex I functions in the transfer of electrons from NADH to the respiratory chain. The immediate electron acceptor for the enzyme is believed to be ubiquinone. This is NADH-ubiquinone oxidoreductase chain 6 (MT-ND6) from Cyprinus carpio (Common carp).